Reading from the N-terminus, the 252-residue chain is 2-succinyl-6-hydroxy-2,4-cyclohexadiene-1-carboxylate synthase (252 aa).

Belongs to the AB hydrolase superfamily. MenH family. In terms of assembly, monomer.

It catalyses the reaction 5-enolpyruvoyl-6-hydroxy-2-succinyl-cyclohex-3-ene-1-carboxylate = (1R,6R)-6-hydroxy-2-succinyl-cyclohexa-2,4-diene-1-carboxylate + pyruvate. It participates in quinol/quinone metabolism; 1,4-dihydroxy-2-naphthoate biosynthesis; 1,4-dihydroxy-2-naphthoate from chorismate: step 3/7. The protein operates within quinol/quinone metabolism; menaquinone biosynthesis. Catalyzes a proton abstraction reaction that results in 2,5-elimination of pyruvate from 2-succinyl-5-enolpyruvyl-6-hydroxy-3-cyclohexene-1-carboxylate (SEPHCHC) and the formation of 2-succinyl-6-hydroxy-2,4-cyclohexadiene-1-carboxylate (SHCHC). In Salmonella choleraesuis (strain SC-B67), this protein is 2-succinyl-6-hydroxy-2,4-cyclohexadiene-1-carboxylate synthase.